The sequence spans 668 residues: Auxilin-like clathrin uncoating factor SWA2 (668 aa).

Residues 1-95 (MSDPFAHLLT…ANNTPPSALA (95 aa)) form a disordered region. The interval 1-100 (MSDPFAHLLT…PSALANTDDD (100 aa)) is CB1. Over residues 17–36 (SASASKETTPQSSNSPSITG) the composition is skewed to polar residues. Phosphoserine occurs at positions 52 and 64. The segment covering 76–92 (PTNSTTKSNTANNTPPS) has biased composition (low complexity). Positions 140-180 (DEVKDMEIARLMSLGLSIEEATEFYENDVTYERYLEILKSK) constitute a UBA domain. A CB2 region spans residues 238 to 302 (EANDRLNNYS…FETKIDITKR (65 aa)). 3 positions are modified to phosphoserine: S264, S308, and S312. 2 disordered regions span residues 302 to 323 (RTAP…EENS) and 339 to 359 (EGNL…ENSN). The interval 303-362 (TAPDVSHSSSPTSGILIEENSRRNEPLIEDSLLDFSEGNLTNSKSNEDSTLFNENSNTDS) is CB3. Over residues 340–359 (GNLTNSKSNEDSTLFNENSN) the composition is skewed to polar residues. TPR repeat units lie at residues 374–407 (YNEF…LPLN), 412–445 (IIAL…FPSS), and 467–500 (PKIM…NFFD). Positions 511 to 556 (QDFINPPPVKKSMPVKKKTTTTSPATKKQNLTASSSNSPISVDSTS) are disordered. Polar residues predominate over residues 539–555 (QNLTASSSNSPISVDST). The J domain occupies 603–668 (CNWKDVSMQD…DKFKLQNDIN (66 aa)).

In terms of assembly, interacts with the clathrin light and heavy chains CLC1 and CHC1, respectively. Binds to clathrin with its N-terminal domain containing 3 clathrin-binding (CB) motifs. Association with clathrin is transient. Binds to polyubiquitin and ubiquitinated proteins.

It is found in the cytoplasm. The protein localises to the endoplasmic reticulum membrane. Cofactor for the uncoating of clathrin-coated vesicles (CCVs) by Hsp70-type chaperones (SSA1/2/3 and SSB1/2). Coat disassembly is important for fusion of vesicles with target membranes and for recycling components of clathrin coats to the cytoplasm for further rounds of vesicle formation. Binds to assembled clathrin and recruits the ATP-activated chaperone to CCVs. Stimulates the ATPase activity of the clathrin-associated Hsp70-type chaperone SSA1, which then disrupts clathrin-clathrin interactions, leading to release of the clathrin coat. In addition, prevents unproductive clathrin assembly in the cell. Also required for cortical endoplasmic reticulum inheritance. The protein is Auxilin-like clathrin uncoating factor SWA2 (SWA2) of Saccharomyces cerevisiae (strain ATCC 204508 / S288c) (Baker's yeast).